Consider the following 413-residue polypeptide: Multifunctional CCA protein (413 aa).

2 residues coordinate ATP: glycine 8 and arginine 11. Residues glycine 8 and arginine 11 each contribute to the CTP site. 2 residues coordinate Mg(2+): aspartate 21 and aspartate 23. ATP-binding residues include arginine 91, arginine 143, and arginine 146. The CTP site is built by arginine 91, arginine 143, and arginine 146. The 102-residue stretch at 232-333 folds into the HD domain; sequence TGVHVMMVVD…VRLFERSDAL (102 aa).

The protein belongs to the tRNA nucleotidyltransferase/poly(A) polymerase family. Bacterial CCA-adding enzyme type 1 subfamily. In terms of assembly, monomer. Can also form homodimers and oligomers. It depends on Mg(2+) as a cofactor. Requires Ni(2+) as cofactor.

The catalysed reaction is a tRNA precursor + 2 CTP + ATP = a tRNA with a 3' CCA end + 3 diphosphate. The enzyme catalyses a tRNA with a 3' CCA end + 2 CTP + ATP = a tRNA with a 3' CCACCA end + 3 diphosphate. Its function is as follows. Catalyzes the addition and repair of the essential 3'-terminal CCA sequence in tRNAs without using a nucleic acid template. Adds these three nucleotides in the order of C, C, and A to the tRNA nucleotide-73, using CTP and ATP as substrates and producing inorganic pyrophosphate. tRNA 3'-terminal CCA addition is required both for tRNA processing and repair. Also involved in tRNA surveillance by mediating tandem CCA addition to generate a CCACCA at the 3' terminus of unstable tRNAs. While stable tRNAs receive only 3'-terminal CCA, unstable tRNAs are marked with CCACCA and rapidly degraded. The protein is Multifunctional CCA protein of Burkholderia lata (strain ATCC 17760 / DSM 23089 / LMG 22485 / NCIMB 9086 / R18194 / 383).